Consider the following 396-residue polypeptide: Ribosomal RNA large subunit methyltransferase I (396 aa).

Residues 2–79 (SIRIKLKPGR…KEEAIDRDFF (78 aa)) form the PUA domain.

It belongs to the methyltransferase superfamily. RlmI family.

It localises to the cytoplasm. The enzyme catalyses cytidine(1962) in 23S rRNA + S-adenosyl-L-methionine = 5-methylcytidine(1962) in 23S rRNA + S-adenosyl-L-homocysteine + H(+). In terms of biological role, specifically methylates the cytosine at position 1962 (m5C1962) of 23S rRNA. This chain is Ribosomal RNA large subunit methyltransferase I, found in Shewanella amazonensis (strain ATCC BAA-1098 / SB2B).